Reading from the N-terminus, the 155-residue chain is Sweet protein mabinlin-2 (155 aa).

The first 20 residues, 1–20 (MAKLIFLFATLALFVLLANA), serve as a signal peptide directing secretion. Positions 21–35 (SIQTTVIEVDEEEDN) are excised as a propeptide. Pyrrolidone carboxylic acid is present on Q36. 4 disulfides stabilise this stretch: C40–C103, C53–C92, C93–C141, and C105–C149. The tract at residues 64 to 86 (GGQPDELEDEVEDDNDDENQPRR) is disordered. Acidic residues predominate over residues 68–81 (DELEDEVEDDNDDE). A propeptide spanning residues 69–82 (ELEDEVEDDNDDEN) is cleaved from the precursor. Pyrrolidone carboxylic acid is present on Q83. P155 is a propeptide.

Belongs to the 2S seed storage albumins family. Heterodimer of a small A and a large B chain linked by disulfide bonds.

In terms of biological role, heat stable 2S seed storage protein having sweetness-inducing activity. This is Sweet protein mabinlin-2 from Capparis masaikai (Mabinlang).